The following is a 120-amino-acid chain: Large ribosomal subunit protein bL20 (120 aa).

This sequence belongs to the bacterial ribosomal protein bL20 family.

Functionally, binds directly to 23S ribosomal RNA and is necessary for the in vitro assembly process of the 50S ribosomal subunit. It is not involved in the protein synthesizing functions of that subunit. This chain is Large ribosomal subunit protein bL20, found in Karelsulcia muelleri (strain GWSS) (Sulcia muelleri).